A 326-amino-acid chain; its full sequence is Nicotianamine synthase 2 (326 aa).

It belongs to the nicotianamine synthase (NAS)-like family. In terms of tissue distribution, expressed in roots.

It catalyses the reaction 3 S-adenosyl-L-methionine = nicotianamine + 3 S-methyl-5'-thioadenosine + 3 H(+). Functionally, synthesizes nicotianamine, a polyamine that is the first intermediate in the synthesis of the phytosiderophores of the mugineic acid type found in gramineae which serve as a sensor for the physiological iron status within the plant, and/or might be involved in the transport of iron. This is Nicotianamine synthase 2 (NAS2) from Oryza sativa subsp. japonica (Rice).